The chain runs to 277 residues: Large ribosomal subunit protein uL2 (277 aa).

Disordered stretches follow at residues 1–58 (MGIR…GGGH) and 223–277 (GVVM…GKKR). Basic and acidic residues predominate over residues 23 to 33 (EITRSEPEKSL). Basic residues predominate over residues 37 to 58 (LHGRGGRNAHGKITTRHKGGGH). A compositionally biased stretch (basic and acidic residues) spans 251–267 (GKPEGRTRRNKPSDKLI). The span at 268–277 (VRRRRTGKKR) shows a compositional bias: basic residues.

This sequence belongs to the universal ribosomal protein uL2 family. In terms of assembly, part of the 50S ribosomal subunit. Forms a bridge to the 30S subunit in the 70S ribosome.

Its function is as follows. One of the primary rRNA binding proteins. Required for association of the 30S and 50S subunits to form the 70S ribosome, for tRNA binding and peptide bond formation. It has been suggested to have peptidyltransferase activity; this is somewhat controversial. Makes several contacts with the 16S rRNA in the 70S ribosome. The sequence is that of Large ribosomal subunit protein uL2 from Saccharopolyspora erythraea (strain ATCC 11635 / DSM 40517 / JCM 4748 / NBRC 13426 / NCIMB 8594 / NRRL 2338).